Reading from the N-terminus, the 523-residue chain is Dynein regulatory complex subunit 3 (523 aa).

5 LRR repeats span residues 44 to 65, 66 to 87, 88 to 109, 110 to 131, and 132 to 153; these read DVLSLQLDFRNILRIDNLWQFE, NLRKLQLDNNIIEKIGGLENLT, HLVWLDLSFNNIETIEGLDTLV, NLEDLSLFNNRISKIDSLDALV, and KLQVLSLGNNQIDNMMNIVYLR. The LRRCT domain occupies 166–206; that stretch reads NPISEAEDYKMFICAYLPDLVYLDFRRIDDHTKELAEAKHQ. Residues 358–391 adopt a coiled-coil conformation; it reads VSELFNELMMLEMQLVEQLEETINMFERNIVDMV.

The protein belongs to the DRC3 family. As to quaternary structure, component of the nexin-dynein regulatory complex (N-DRC). Interacts with DRC1. Interacts with TCTE1/DRC5. Interacts with DRC7.

It is found in the cytoplasm. It localises to the cytoskeleton. The protein resides in the cilium axoneme. Its subcellular location is the cell projection. The protein localises to the cilium. It is found in the flagellum axoneme. It localises to the flagellum. Functionally, component of the nexin-dynein regulatory complex (N-DRC) a key regulator of ciliary/flagellar motility which maintains the alignment and integrity of the distal axoneme and regulates microtubule sliding in motile axonemes. This is Dynein regulatory complex subunit 3 (DRC3) from Macaca fascicularis (Crab-eating macaque).